Reading from the N-terminus, the 297-residue chain is N-acetylmuramic acid 6-phosphate etherase (297 aa).

One can recognise an SIS domain in the interval 55–218; the sequence is AAAALTRGGR…STGAMVKCGK (164 aa). Catalysis depends on Glu-83, which acts as the Proton donor. Residue Glu-114 is part of the active site.

The protein belongs to the GCKR-like family. MurNAc-6-P etherase subfamily. In terms of assembly, homodimer.

It carries out the reaction N-acetyl-D-muramate 6-phosphate + H2O = N-acetyl-D-glucosamine 6-phosphate + (R)-lactate. It functions in the pathway amino-sugar metabolism; 1,6-anhydro-N-acetylmuramate degradation. It participates in amino-sugar metabolism; N-acetylmuramate degradation. The protein operates within cell wall biogenesis; peptidoglycan recycling. Specifically catalyzes the cleavage of the D-lactyl ether substituent of MurNAc 6-phosphate, producing GlcNAc 6-phosphate and D-lactate. Together with AnmK, is also required for the utilization of anhydro-N-acetylmuramic acid (anhMurNAc) either imported from the medium or derived from its own cell wall murein, and thus plays a role in cell wall recycling. The protein is N-acetylmuramic acid 6-phosphate etherase of Cronobacter sakazakii (strain ATCC BAA-894) (Enterobacter sakazakii).